Reading from the N-terminus, the 218-residue chain is Glutathione S-transferase class-mu 26 kDa isozyme 51 (218 aa).

Positions 2–83 constitute a GST N-terminal domain; it reads PAKLGYWKIR…YIADKHGMLG (82 aa). Residues 7-8, 41-45, 54-55, and 67-68 contribute to the glutathione site; these read YW, WFGDK, NL, and QS. The 119-residue stretch at 85-203 folds into the GST C-terminal domain; that stretch reads TPEERARISM…ESEKFIKWPL (119 aa). Y111 is a substrate binding site.

It belongs to the GST superfamily. Mu family. In terms of assembly, homodimer.

It is found in the cytoplasm. The enzyme catalyses RX + glutathione = an S-substituted glutathione + a halide anion + H(+). In terms of biological role, conjugation of reduced glutathione to a wide number of exogenous and endogenous hydrophobic electrophiles. GST isoenzymes appear to play a central role in the parasite detoxification system. Other functions are also suspected including a role in increasing the solubility of haematin in the parasite gut. The polypeptide is Glutathione S-transferase class-mu 26 kDa isozyme 51 (Fasciola hepatica (Liver fluke)).